A 532-amino-acid chain; its full sequence is Glycerophosphocholine permease GIT4 (532 aa).

6 consecutive transmembrane segments (helical) span residues 55–75 (LWPA…NAGI), 98–118 (NIGS…GYIS), 126–146 (GMLT…VASW), 150–170 (VQGF…AIGA), 201–221 (AMID…LWIF), and 229–249 (VWRL…FIRL). N-linked (GlcNAc...) asparagine glycosylation occurs at Asn-266. Residues 272–292 (WWLIIKFYWFRLTVVSLIWFI) form a helical membrane-spanning segment. A glycan (N-linked (GlcNAc...) asparagine) is linked at Asn-314. A run of 3 helical transmembrane segments spans residues 321-341 (WGWS…GAFI), 349-369 (LTLA…SACL), and 375-395 (HVAG…FGPG). N-linked (GlcNAc...) asparagine glycosylation is present at Asn-396. Transmembrane regions (helical) follow at residues 416–436 (GIAA…FPAI) and 450–470 (VPFY…IFFV).

This sequence belongs to the major facilitator superfamily. Sugar transporter (TC 2.A.1.1) family.

Its subcellular location is the cell membrane. The catalysed reaction is sn-glycerol 3-phosphocholine(out) = sn-glycerol 3-phosphocholine(in). Glycerophosphodiester transporter that mediates uptake of glycerophosphocholine (GroPCho) with GIT3. Does not possess detectable glycerophosphoinositol (GroPIns) transport activity. The expanded ability to utilize GroPIns and GroPCho results from the organism's pathogenic nature and its need to occupy a variety of environments within its host organism. This possibility is buttressed by the fact that GroPIns and GroPCho are present and abundant in human fluids. This is Glycerophosphocholine permease GIT4 from Candida albicans (strain SC5314 / ATCC MYA-2876) (Yeast).